The primary structure comprises 301 residues: Recombination-associated protein RdgC (301 aa).

The protein belongs to the RdgC family.

It is found in the cytoplasm. The protein resides in the nucleoid. Functionally, may be involved in recombination. This Pseudoalteromonas atlantica (strain T6c / ATCC BAA-1087) protein is Recombination-associated protein RdgC.